Reading from the N-terminus, the 163-residue chain is MSLLLLVVSALHILILILLFVATLDKSWWTLPGKESLNLWYDCTWNSDNKTWACSNVSENGWLKAVQVLMVLSLILCCLSFILFMFQLYTMRRGGLFYATGFCQLCTSVAVFTGALIYAIHAEEILADRPSGGSFGYCFALAWVAFPLALASGIIYIHLRKRE.

A helical membrane pass occupies residues 4 to 24; sequence LLLVVSALHILILILLFVATL. Asparagine 49 and asparagine 56 each carry an N-linked (GlcNAc...) asparagine glycan. 3 consecutive transmembrane segments (helical) span residues 66–86, 100–120, and 139–159; these read VQVL…LFMF, TGFC…IYAI, and FALA…YIHL.

Belongs to the PMP-22/EMP/MP20 family.

The protein resides in the membrane. Probably involved in cell proliferation and cell-cell interactions. This is Epithelial membrane protein 3 (EMP3) from Bos taurus (Bovine).